Consider the following 141-residue polypeptide: Hemoglobin subunit alpha (141 aa).

Residues 1-141 (VLSPADKTNV…VSTVLTSKYR (141 aa)) enclose the Globin domain. Ser3 carries the post-translational modification Phosphoserine. Lys7 carries the post-translational modification N6-succinyllysine. Thr8 carries the post-translational modification Phosphothreonine. At Lys11 the chain carries N6-succinyllysine. Lys16 carries the N6-acetyllysine; alternate modification. An N6-succinyllysine; alternate modification is found at Lys16. Tyr24 is subject to Phosphotyrosine. Lys40 carries the N6-succinyllysine modification. Residue His58 participates in O2 binding. His87 contributes to the heme b binding site. A Phosphoserine modification is found at Ser102. Residue Thr108 is modified to Phosphothreonine. Residues Ser124 and Ser131 each carry the phosphoserine modification. Phosphothreonine occurs at positions 134 and 137. Ser138 is subject to Phosphoserine.

This sequence belongs to the globin family. In terms of assembly, heterotetramer of two alpha chains and two beta chains. In terms of tissue distribution, red blood cells.

Its function is as follows. Involved in oxygen transport from the lung to the various peripheral tissues. Functionally, hemopressin acts as an antagonist peptide of the cannabinoid receptor CNR1. Hemopressin-binding efficiently blocks cannabinoid receptor CNR1 and subsequent signaling. This Tursiops truncatus (Atlantic bottle-nosed dolphin) protein is Hemoglobin subunit alpha (HBA).